The following is a 57-amino-acid chain: IFFFVFACLLALSAVSAAPEPRWKVFKKIEKVGRNVRDGIIKAGPAIGVLGQAKALG.

The N-terminal stretch at 1–21 (IFFFVFACLLALSAVSAAPEP) is a signal peptide.

The protein belongs to the cecropin family.

The protein localises to the secreted. Its function is as follows. Cecropins have lytic and antibacterial activity against several Gram-positive and Gram-negative bacteria. In Spodoptera litura (Asian cotton leafworm), this protein is Cecropin-A (CECA).